We begin with the raw amino-acid sequence, 330 residues long: Malate dehydrogenase (330 aa).

Position 12–18 (12–18 (GAAGQIG)) interacts with NAD(+). Arg93 and Arg99 together coordinate substrate. Residues Asn106, Gln113, and 130 to 132 (VGN) each bind NAD(+). Positions 132 and 163 each coordinate substrate. His188 functions as the Proton acceptor in the catalytic mechanism.

Belongs to the LDH/MDH superfamily. MDH type 2 family.

The enzyme catalyses (S)-malate + NAD(+) = oxaloacetate + NADH + H(+). Catalyzes the reversible oxidation of malate to oxaloacetate. The protein is Malate dehydrogenase of Legionella pneumophila (strain Lens).